We begin with the raw amino-acid sequence, 211 residues long: Thiamine-phosphate synthase (211 aa).

4-amino-2-methyl-5-(diphosphooxymethyl)pyrimidine is bound by residues 43–47 (QLRDK) and Asn-75. The Mg(2+) site is built by Asp-76 and Asp-95. Position 114 (Ser-114) interacts with 4-amino-2-methyl-5-(diphosphooxymethyl)pyrimidine. 140–142 (TAS) contacts 2-[(2R,5Z)-2-carboxy-4-methylthiazol-5(2H)-ylidene]ethyl phosphate. A 4-amino-2-methyl-5-(diphosphooxymethyl)pyrimidine-binding site is contributed by Lys-143. 2-[(2R,5Z)-2-carboxy-4-methylthiazol-5(2H)-ylidene]ethyl phosphate-binding positions include Gly-170 and 190–191 (IS).

This sequence belongs to the thiamine-phosphate synthase family. Mg(2+) is required as a cofactor.

It carries out the reaction 2-[(2R,5Z)-2-carboxy-4-methylthiazol-5(2H)-ylidene]ethyl phosphate + 4-amino-2-methyl-5-(diphosphooxymethyl)pyrimidine + 2 H(+) = thiamine phosphate + CO2 + diphosphate. It catalyses the reaction 2-(2-carboxy-4-methylthiazol-5-yl)ethyl phosphate + 4-amino-2-methyl-5-(diphosphooxymethyl)pyrimidine + 2 H(+) = thiamine phosphate + CO2 + diphosphate. The enzyme catalyses 4-methyl-5-(2-phosphooxyethyl)-thiazole + 4-amino-2-methyl-5-(diphosphooxymethyl)pyrimidine + H(+) = thiamine phosphate + diphosphate. It functions in the pathway cofactor biosynthesis; thiamine diphosphate biosynthesis; thiamine phosphate from 4-amino-2-methyl-5-diphosphomethylpyrimidine and 4-methyl-5-(2-phosphoethyl)-thiazole: step 1/1. Condenses 4-methyl-5-(beta-hydroxyethyl)thiazole monophosphate (THZ-P) and 2-methyl-4-amino-5-hydroxymethyl pyrimidine pyrophosphate (HMP-PP) to form thiamine monophosphate (TMP). This is Thiamine-phosphate synthase from Coprothermobacter proteolyticus (strain ATCC 35245 / DSM 5265 / OCM 4 / BT).